Consider the following 688-residue polypeptide: Protein sel-1 homolog 2 (688 aa).

The N-terminal stretch at 1–23 is a signal peptide; it reads MKPLSLLIEILIILGVTIKTIKA. Topologically, residues 24–662 are extracellular; the sequence is EEHNKRQKER…RWNWLKLDNT (639 aa). An N-linked (GlcNAc...) asparagine glycan is attached at Asn34. Sel1-like repeat units lie at residues 107–142, 143–178, 179–214, 215–250, 297–333, 334–370, 371–406, 407–442, 443–478, 551–586, and 588–623; these read GDQL…DMGN, LKAM…KEGS, CKAQ…AGGN, MMSQ…DYIA, VQIQ…KAGS, ANAM…SKGN, AIGL…EKGW, PDAQ…QSGQ, PLAI…ELGH, AFAR…NKYH, and AQAM…QTSP. The helical transmembrane segment at 663 to 683 threads the bilayer; the sequence is IGPHWDLFVIGLIVPGLILLL. Over 684–688 the chain is Cytoplasmic; sequence RNHHG.

Belongs to the sel-1 family.

The protein localises to the membrane. Its subcellular location is the cell projection. It is found in the cilium. It localises to the nucleus speckle. In Homo sapiens (Human), this protein is Protein sel-1 homolog 2 (SEL1L2).